Consider the following 162-residue polypeptide: Photosystem II extrinsic protein V (162 aa).

An N-terminal signal peptide occupies residues 1–25 (MFKKFSALFTLLFTLCLVNPMLVYS). Residues C62, C65, H66, and H117 each coordinate heme c.

The protein belongs to the cytochrome c family. PsbV subfamily. PSII is composed of 1 copy each of membrane proteins PsbA, PsbB, PsbC, PsbD, PsbE, PsbF, PsbH, PsbI, PsbJ, PsbK, PsbL, PsbM, PsbT, PsbX, PsbY, PsbZ, Psb30/Ycf12, at least 3 peripheral proteins of the oxygen-evolving complex and a large number of cofactors. It forms dimeric complexes. Heme c serves as cofactor.

Its subcellular location is the plastid. It is found in the chloroplast thylakoid membrane. Functionally, one of the extrinsic, lumenal subunits of photosystem II (PSII). PSII is a light-driven water plastoquinone oxidoreductase, using light energy to abstract electrons from H(2)O, generating a proton gradient subsequently used for ATP formation. The extrinsic proteins stabilize the structure of photosystem II oxygen-evolving complex (OEC), the ion environment of oxygen evolution and protect the OEC against heat-induced inactivation. The protein is Photosystem II extrinsic protein V of Guillardia theta (Cryptophyte).